The chain runs to 634 residues: Chaperone protein DnaK (634 aa).

The residue at position 197 (T197) is a Phosphothreonine; by autocatalysis. Basic and acidic residues predominate over residues 515–528; it reads LHKEDDKKRKESVD. Disordered regions lie at residues 515-536 and 595-634; these read LHKE…ADAI and YKAA…AEVE. Gly residues predominate over residues 603–615; that stretch reads NAGGTAGGNGNAG.

This sequence belongs to the heat shock protein 70 family.

Functionally, acts as a chaperone. This is Chaperone protein DnaK from Campylobacter hominis (strain ATCC BAA-381 / DSM 21671 / CCUG 45161 / LMG 19568 / NCTC 13146 / CH001A).